The primary structure comprises 531 residues: SWI/SNF-related matrix-associated actin-dependent regulator of chromatin subfamily D member 2 (531 aa).

The interval 20 to 85 (AVAAALGAPP…MSPGSRMPMA (66 aa)) is disordered. A compositionally biased stretch (low complexity) spans 34 to 45 (PGMLPNPALRGP). Residues Arg81 and Arg104 each carry the asymmetric dimethylarginine modification. Residues 202–226 (FSPSKADGDNSGTAGTPGGTPAADK) are disordered. Ser203 carries the post-translational modification Phosphoserine. A Phosphothreonine modification is found at Thr217. Residue Lys226 forms a Glycyl lysine isopeptide (Lys-Gly) (interchain with G-Cter in SUMO2) linkage. Residues 306 to 383 (HQPPQYKLDP…PMKLAGLLQH (78 aa)) form the SWIB/MDM2 domain.

Belongs to the SMARCD family. Component of the multiprotein chromatin-remodeling complexes SWI/SNF: SWI/SNF-A (BAF), SWI/SNF-B (PBAF) and related complexes. The canonical complex contains a catalytic subunit (either SMARCA4/BRG1/BAF190A or SMARCA2/BRM/BAF190B), and at least SMARCE1, ACTL6A/BAF53, SMARCC1/BAF155, SMARCC2/BAF170, and SMARCB1/SNF5/BAF47. Other subunits specific to each of the complexes may also be present permitting several possible combinations developmentally and tissue specific. Component of the BAF complex, which includes at least actin (ACTB), ARID1A/BAF250A, ARID1B/BAF250B, SMARCA2/BRM, SMARCA4/BRG1, ACTL6A/BAF53, ACTL6B/BAF53B, SMARCE1/BAF57, SMARCC1/BAF155, SMARCC2/BAF170, SMARCB1/SNF5/INI1, and one or more SMARCD1/BAF60A, SMARCD2/BAF60B, or SMARCD3/BAF60C. In muscle cells, the BAF complex also contains DPF3. Component of the SWI/SNF-B (PBAF) chromatin remodeling complex, at least composed of SMARCA4/BRG1, SMARCB1/BAF47/SNF5, ACTL6A/BAF53A or ACTL6B/BAF53B, SMARCE1/BAF57, SMARCD1/BAF60A, SMARCD2/BAF60B, perhaps SMARCD3/BAF60C, SMARCC1/BAF155, SMARCC2/BAF170, PBRM1/BAF180, ARID2/BAF200 and actin (ACTB). Interacts with UNKL. Interacts with CEBPE. In terms of processing, ubiquitinated through a signaling process involving RAC1 and the RING finger protein UNKL.

Its subcellular location is the nucleus. Functionally, involved in transcriptional activation and repression of select genes by chromatin remodeling (alteration of DNA-nucleosome topology). Component of SWI/SNF chromatin remodeling complexes that carry out key enzymatic activities, changing chromatin structure by altering DNA-histone contacts within a nucleosome in an ATP-dependent manner. Critical regulator of myeloid differentiation, controlling granulocytopoiesis and the expression of genes involved in neutrophil granule formation. In Rattus norvegicus (Rat), this protein is SWI/SNF-related matrix-associated actin-dependent regulator of chromatin subfamily D member 2 (Smarcd2).